A 67-amino-acid polypeptide reads, in one-letter code: Small ribosomal subunit protein eS31 (67 aa).

Cys-35, Cys-38, Cys-54, and Cys-57 together coordinate Zn(2+). Residues 35–57 (CPRCGSIMAHHMKPLERWACGKC) form a C4-type zinc finger.

The protein belongs to the eukaryotic ribosomal protein eS31 family. Part of the 30S ribosomal subunit. The cofactor is Zn(2+).

This Sulfolobus acidocaldarius (strain ATCC 33909 / DSM 639 / JCM 8929 / NBRC 15157 / NCIMB 11770) protein is Small ribosomal subunit protein eS31.